Reading from the N-terminus, the 110-residue chain is tRNA-binding protein YgjH (110 aa).

In terms of domain architecture, tRNA-binding spans 8 to 110 (DFARLEMRVG…RMMPAGVRVV (103 aa)).

In terms of assembly, homodimer.

The sequence is that of tRNA-binding protein YgjH (ygjH) from Escherichia coli (strain K12).